The chain runs to 270 residues: Ribonuclease HII (270 aa).

The RNase H type-2 domain maps to Arg28–Arg222. Positions 34, 35, and 128 each coordinate a divalent metal cation.

Belongs to the RNase HII family. Requires Mn(2+) as cofactor. The cofactor is Mg(2+).

The protein resides in the cytoplasm. The catalysed reaction is Endonucleolytic cleavage to 5'-phosphomonoester.. Endonuclease that specifically degrades the RNA of RNA-DNA hybrids. This Salinispora tropica (strain ATCC BAA-916 / DSM 44818 / JCM 13857 / NBRC 105044 / CNB-440) protein is Ribonuclease HII.